The sequence spans 398 residues: MTIRNQRFSLLKQPIYSTLNQHLIDYPTPSNLSYWWGFGSLAGICLVIQIVTGVFLAMHYTPHVDLAFNSVEHIMRDVEGGWLLRYMHANGASMFFIVVYLHIFRGLYYASYSSPREFVWCLGVVIFLLMIVTAFIGYVLPWGQMSFWGATVITSLASAIPVVGDTIVTWLWGGFSVDNATLNRFFSLHYLLPFILVGASLLHLAALHQYGSNNPLGVHSEMDKIAFYPYFYVKDLVGWVAFAIFFSIWIFFAPNVLGHPDNYIPANPMSTPPHIVPEWYFLPIYAILRSIPDKAGGVAAIALVFISLLALPFFKEMYVRSSSFRPIYQGIFWLLLADCLLLGWIGCQPVEAPFVTIGQISSVFFFLFFAITPILGRVGRGIPKYYTDETHRTGSFWP.

A run of 4 helical transmembrane segments spans residues 38–58 (FGSL…FLAM), 82–104 (WLLR…LHIF), 119–139 (VWCL…IGYV), and 185–205 (FFSL…LHLA). Heme b is bound by residues His-88 and His-102. Residues His-189 and His-203 each coordinate heme b. His-208 provides a ligand contact to a ubiquinone. Transmembrane regions (helical) follow at residues 231–251 (FYVK…IWIF), 295–315 (AGGV…PFFK), 327–347 (IYQG…WIGC), and 354–373 (FVTI…AITP).

It belongs to the cytochrome b family. The main subunits of complex b-c1 are: cytochrome b, cytochrome c1 and the Rieske protein. The cofactor is heme b.

The protein resides in the mitochondrion inner membrane. In terms of biological role, component of the ubiquinol-cytochrome c reductase complex (complex III or cytochrome b-c1 complex) that is part of the mitochondrial respiratory chain. The b-c1 complex mediates electron transfer from ubiquinol to cytochrome c. Contributes to the generation of a proton gradient across the mitochondrial membrane that is then used for ATP synthesis. This Triticum aestivum (Wheat) protein is Cytochrome b (MT-CYB).